Here is a 204-residue protein sequence, read N- to C-terminus: Thymidylate kinase (204 aa).

Residue Gly-11–Ser-18 coordinates ATP.

It belongs to the thymidylate kinase family.

It carries out the reaction dTMP + ATP = dTDP + ADP. Functionally, phosphorylation of dTMP to form dTDP in both de novo and salvage pathways of dTTP synthesis. In Janthinobacterium sp. (strain Marseille) (Minibacterium massiliensis), this protein is Thymidylate kinase.